We begin with the raw amino-acid sequence, 830 residues long: Penicillin-binding protein 1A (830 aa).

Residues 1-18 are Cytoplasmic-facing; it reads MGKKKKKRKSSAFKIILN. A helical; Signal-anchor for type II membrane protein transmembrane segment spans residues 19-39; it reads VFLSIFLVAGVAFGGIVFAMI. The Extracellular portion of the chain corresponds to 40 to 830; it reads KTAPPLNVQQ…QNHEDNKNKQ (791 aa). The interval 57 to 229 is transglycosylase; the sequence is SILYDDKGQY…PSVYYPYSSA (173 aa). E96 functions as the Proton donor; for transglycosylase activity in the catalytic mechanism. Positions 357–641 are transpeptidase; it reads ASAVIMDYHN…AARLWGDIMK (285 aa). Residue S398 is the Acyl-ester intermediate; for transpeptidase activity of the active site. The segment at 754 to 830 is disordered; the sequence is GGSLPPTEEK…QNHEDNKNKQ (77 aa). Residues 760 to 786 show a composition bias toward basic and acidic residues; that stretch reads TEEKNNSNTRDKNKDKNKNKNKDKNPS. Positions 787-820 are enriched in low complexity; it reads QDKPNNNNNDNNSNNNNNNNDNNNNTKPPENDSN. Over residues 821–830 the composition is skewed to basic and acidic residues; the sequence is QNHEDNKNKQ.

This sequence in the N-terminal section; belongs to the glycosyltransferase 51 family. In the C-terminal section; belongs to the transpeptidase family.

It is found in the cell membrane. The catalysed reaction is [GlcNAc-(1-&gt;4)-Mur2Ac(oyl-L-Ala-gamma-D-Glu-L-Lys-D-Ala-D-Ala)](n)-di-trans,octa-cis-undecaprenyl diphosphate + beta-D-GlcNAc-(1-&gt;4)-Mur2Ac(oyl-L-Ala-gamma-D-Glu-L-Lys-D-Ala-D-Ala)-di-trans,octa-cis-undecaprenyl diphosphate = [GlcNAc-(1-&gt;4)-Mur2Ac(oyl-L-Ala-gamma-D-Glu-L-Lys-D-Ala-D-Ala)](n+1)-di-trans,octa-cis-undecaprenyl diphosphate + di-trans,octa-cis-undecaprenyl diphosphate + H(+). It carries out the reaction Preferential cleavage: (Ac)2-L-Lys-D-Ala-|-D-Ala. Also transpeptidation of peptidyl-alanyl moieties that are N-acyl substituents of D-alanine.. Its pathway is cell wall biogenesis; peptidoglycan biosynthesis. Functionally, cell wall formation. Synthesis of cross-linked peptidoglycan from the lipid intermediates. The enzyme has a penicillin-insensitive transglycosylase N-terminal domain (formation of linear glycan strands) and a penicillin-sensitive transpeptidase C-terminal domain (cross-linking of the peptide subunits). This Clostridium botulinum (strain Hall / ATCC 3502 / NCTC 13319 / Type A) protein is Penicillin-binding protein 1A (pbpA).